The following is a 237-amino-acid chain: Uridylate kinase (237 aa).

12 to 15 (KLSG) is an ATP binding site. The interval 20–25 (GENGYG) is involved in allosteric activation by GTP. G54 contributes to the UMP binding site. ATP-binding residues include G55 and R59. Residues D72 and 133–140 (TGNPYFST) each bind UMP. ATP contacts are provided by Y166 and D169.

The protein belongs to the UMP kinase family. Homohexamer.

The protein localises to the cytoplasm. The catalysed reaction is UMP + ATP = UDP + ADP. Its pathway is pyrimidine metabolism; CTP biosynthesis via de novo pathway; UDP from UMP (UMPK route): step 1/1. With respect to regulation, allosterically activated by GTP. Inhibited by UTP. In terms of biological role, catalyzes the reversible phosphorylation of UMP to UDP. The protein is Uridylate kinase of Clostridium tetani (strain Massachusetts / E88).